Reading from the N-terminus, the 128-residue chain is UPF0102 protein Mext_0406 (128 aa).

This sequence belongs to the UPF0102 family.

The chain is UPF0102 protein Mext_0406 from Methylorubrum extorquens (strain PA1) (Methylobacterium extorquens).